We begin with the raw amino-acid sequence, 828 residues long: MKLSRRSFMKANAVAAAAAAAGLSVPGVARAVVGQQEAIKWDKAPCRFCGTGCGVLVGTQQGRVVACQGDPDAPVNRGLNCIKGYFLPKIMYGKDRLTQPMLRMKDGSYHKDGEFTPVSWEQAFDVMEEKFKTSLKEKGPEAIGMFGSGQWTIWEGYAAAKLFKAGFRSNNIDPNARHCMASAVVGFMRTFGMDEPMGCYDDIEQADAFVLWGSNMAEMHPILWSRITNRRLSDPNVKVAVLSTFQHRSFELADNGIVFTPQSDLVILNYIANYIIQNNAVNQDFFTKHVNLRKGATDIGYGLRPTHPLEKAAKNPGSDASEPMSFDEYKAFVAEYTLDKTAEMTGVPKDQLEQLAQLYADPNKRVISYWTMGFNQHTRGVWANNLVYNLHLLTGKISQPGCGPFSLTGQPSACGTAREVGTFSHRLPADMVVTNEKHRDICEKHWQIPAGTIPAKVGLHAVAQDRALKDGKLNVYWVMCNNNMQAGPNINEDRMPGWRDPRNFIIVSDPYPTVSALSADLILPTAMWVEKEGAYGNAERRTQFWRQQIKAPGEAKSDLWQLVQFSRRFKTEEVWPEALLSQKPELRGKTLYDVLFATPAVSKFPLSELKEDQLNDESRELGFYLQKGLFEEYAWFGRGHGHDLAPFDDYHNARGLRWPVVEGKETQWRYSEGNDPYVKAGEGYKFYGKPDGKAVIFALPFEPAAESPDNEYDLWLSTGRVLEHWHTGSMTRRVPELHRAFPEAVVFIHPLDAKARDLRRGDKVKVSSRRGEVISIVETRGRNRPPQGLVYMPFFDAAQLVNNLTLDATDPLSKETDFKKCAVKLAKV.

The tat-type signal signal peptide spans Met1–Ala31. The 4Fe-4S Mo/W bis-MGD-type domain maps to Ile39–Asp95. [4Fe-4S] cluster-binding residues include Cys46, Cys49, Cys53, and Cys81. Residues Lys83, Gln150, Asn175, Cys179, Trp212 to Met219, Ser243 to His247, Gln262 to Asp264, Met372, Gln376, Asn482, Ser508 to Asp509, Lys531, Asp558, and Thr718 to Thr727 contribute to the Mo-bis(molybdopterin guanine dinucleotide) site. Phe794 contacts substrate. Mo-bis(molybdopterin guanine dinucleotide) contacts are provided by Asn802 and Lys819.

It belongs to the prokaryotic molybdopterin-containing oxidoreductase family. NasA/NapA/NarB subfamily. As to quaternary structure, component of the periplasmic nitrate reductase NapAB complex composed of NapA and NapB. Requires [4Fe-4S] cluster as cofactor. Mo-bis(molybdopterin guanine dinucleotide) is required as a cofactor. In terms of processing, predicted to be exported by the Tat system. The position of the signal peptide cleavage has not been experimentally proven.

It is found in the periplasm. It catalyses the reaction 2 Fe(II)-[cytochrome] + nitrate + 2 H(+) = 2 Fe(III)-[cytochrome] + nitrite + H2O. Its function is as follows. Catalytic subunit of the periplasmic nitrate reductase complex NapAB. Receives electrons from NapB and catalyzes the reduction of nitrate to nitrite. This Salmonella dublin (strain CT_02021853) protein is Periplasmic nitrate reductase.